The chain runs to 336 residues: CMP-sialic acid transporter (336 aa).

The Cytoplasmic portion of the chain corresponds to 1 to 9 (MAQARENVS). The chain crosses the membrane as a helical span at residues 10–30 (LFFKLYCLAVMTLVAAAYTVA). Topologically, residues 31–45 (LRYTRTTAKELYFST) are lumenal. The chain crosses the membrane as a helical span at residues 46-64 (TAVCVTEVIKLLISVGLLA). Lys55 is a CMP-N-acetyl-beta-neuraminate binding site. The Cytoplasmic segment spans residues 65–87 (KETGSLGRFKASLSENVLGSPKE). Residues 88–108 (LMKLSVPSLVYAVQNNMAFLA) traverse the membrane as a helical segment. 101–102 (QN) provides a ligand contact to CMP-N-acetyl-beta-neuraminate. Over 109–114 (LSNLDA) the chain is Lumenal. Residues 115-135 (AVYQVTYQLKIPCTALCTVLM) form a helical membrane-spanning segment. A CMP-N-acetyl-beta-neuraminate-binding site is contributed by 117–124 (YQVTYQLK). Residues 136–141 (LNRTLS) lie on the Cytoplasmic side of the membrane. The helical transmembrane segment at 142-160 (KLQWVSVFMLCGGVILVQW) threads the bilayer. The Lumenal portion of the chain corresponds to 161-175 (KPAQATKVVVEQSPL). A helical transmembrane segment spans residues 176-196 (LGFGAIAIAVLCSGFAGVYFE). Residue Ser188 participates in CMP-N-acetyl-beta-neuraminate binding. Residues 197–209 (KVLKSSDTSLWVR) lie on the Cytoplasmic side of the membrane. Position 210 to 214 (210 to 214 (NIQMY)) interacts with CMP-N-acetyl-beta-neuraminate. Residues 210 to 228 (NIQMYLSGIVVTLVGTYLS) traverse the membrane as a helical segment. At 229–243 (DGAEIKEKGFFYGYT) the chain is on the lumenal side. Residues 244 to 262 (YYVWFVIFLASVGGLYTSV) form a helical membrane-spanning segment. The Cytoplasmic segment spans residues 263-269 (VVKYTDN). A helical transmembrane segment spans residues 270–288 (IMKGFSAAAAIVLSTIASV). A CMP-N-acetyl-beta-neuraminate-binding site is contributed by Lys272. Topologically, residues 289 to 296 (MLFGLQIT) are lumenal. Residues 297–315 (LSFAMGALLVCISIYLYGL) traverse the membrane as a helical segment. The Cytoplasmic portion of the chain corresponds to 316–336 (PRQDTTCIQQEATSKERVIGV). The tract at residues 316–336 (PRQDTTCIQQEATSKERVIGV) is disordered.

The protein belongs to the nucleotide-sugar transporter family. SLC35A subfamily. As to quaternary structure, monomer.

Its subcellular location is the golgi apparatus membrane. It catalyses the reaction CMP-N-acetyl-beta-neuraminate(in) + CMP(out) = CMP-N-acetyl-beta-neuraminate(out) + CMP(in). It carries out the reaction CMP-N-acetyl-beta-neuraminate(in) + AMP(out) = CMP-N-acetyl-beta-neuraminate(out) + AMP(in). The enzyme catalyses CDP-L-ribitol(in) + CDP(out) = CDP-L-ribitol(out) + CDP(in). The catalysed reaction is UMP(out) + CMP-N-acetyl-beta-neuraminate(in) = UMP(in) + CMP-N-acetyl-beta-neuraminate(out). Functionally, transports CMP-sialic acid from the cytosol into the Golgi apparatus, functioning as an antiporter that exchanges CMP-sialic acid for CMP. Binds both CMP-sialic acid and free CMP, but has higher affinity for free CMP. Also able to exchange CMP-sialic acid for AMP and UMP. Also mediates the transport of CDP-ribitol. This chain is CMP-sialic acid transporter (SLC35A1), found in Cricetulus griseus (Chinese hamster).